Consider the following 83-residue polypeptide: Neurotoxin LmNaTx10 (83 aa).

The N-terminal stretch at 1–19 (MNFLIFIAVASSLALGALC) is a signal peptide. In terms of domain architecture, LCN-type CS-alpha/beta spans 21-80 (KEGYPYDGNNCRYICFRNQYCDDLCKKLKGESGYCYGWNQSCYCYGLPDTEKTKPDKRCH). Cystine bridges form between Cys31–Cys79, Cys35–Cys55, Cys41–Cys62, and Cys45–Cys64.

It belongs to the long (4 C-C) scorpion toxin superfamily. Sodium channel inhibitor family. Alpha subfamily. As to expression, expressed by the venom gland.

Its subcellular location is the secreted. Binds voltage-independently at site-3 of voltage-gated sodium channels (Nav) and inhibits the inactivation of the activated channels, thereby blocking neuronal transmission. The sequence is that of Neurotoxin LmNaTx10 from Lychas mucronatus (Chinese swimming scorpion).